The primary structure comprises 144 residues: MNFKYIVAVSFLLASAYARSEENDEQSLSQRDVLEEESLREIRGIGTKILGGVKTALKGALKELASTYANGKRTAEEHEVMKRLEAVMRDLDSLDYPEEAAERETRSFNQEEIANLFTKKEKRILGPVISTIGGVLGGLLKNLG.

A signal peptide spans 1–18; that stretch reads MNFKYIVAVSFLLASAYA. Residues 19 to 43 constitute a propeptide that is removed on maturation; the sequence is RSEENDEQSLSQRDVLEEESLREIR. Residue Asn-70 is modified to Asparagine amide. The propeptide occupies 74–123; that stretch reads TAEEHEVMKRLEAVMRDLDSLDYPEEAAERETRSFNQEEIANLFTKKEKR. Leu-143 carries the leucine amide modification.

This sequence belongs to the bombinin family. In terms of tissue distribution, expressed by the skin glands.

It localises to the secreted. Functionally, antibacterial peptide with amphipathic alpha-helical structure that has activity against both Gram-positive and Gram-negative bacteria. Also shows antimicrobial activity against the fungus C.albicans, but not against A.flavus nor P.uticale. It has little hemolytic activity. It possess a significant cytotoxicity against tumor cell lines, but does not possess a significant anti-HIV activity. Also shows high spermicidal activity. Antibacterial peptide with activity against both Gram-positive and Gram-negative bacteria. Also shows antimicrobial activity against the fungus C.albicans. In addition, shows strong hemolytic activity. In Bombina maxima (Giant fire-bellied toad), this protein is Maximins 1/H1.